A 342-amino-acid chain; its full sequence is Cathepsin B-like cysteine proteinase 2 (342 aa).

A signal peptide spans Met-1–Ala-18. Positions Asp-19–Asp-86 are cleaved as a propeptide — activation peptide. The N-linked (GlcNAc...) asparagine glycan is linked to Asn-99. 6 disulfide bridges follow: Cys-100–Cys-128, Cys-111–Cys-156, Cys-147–Cys-214, Cys-148–Cys-152, Cys-185–Cys-218, and Cys-193–Cys-205. Cys-114 is an active-site residue. N-linked (GlcNAc...) asparagine glycosylation occurs at Asn-138. Residue Asn-198 is glycosylated (N-linked (GlcNAc...) asparagine). Residue His-285 is part of the active site. Asn-296 carries an N-linked (GlcNAc...) asparagine glycan. Asn-305 is a catalytic residue.

The protein belongs to the peptidase C1 family.

In terms of biological role, expression of the protease correlates with blood-feeding and suggests a role for the protease in blood digestion. The protein is Cathepsin B-like cysteine proteinase 2 (AC-2) of Haemonchus contortus (Barber pole worm).